The following is a 498-amino-acid chain: Death-associated inhibitor of apoptosis 2 (498 aa).

3 BIR repeats span residues 12 to 77, 116 to 180, and 215 to 280; these read RLAT…SMVL, RLVT…PRVQ, and RLRT…QFVL. The Zn(2+) site is built by C249, C252, H269, and C276. The RING-type zinc-finger motif lies at 451 to 486; that stretch reads CKVCLDEEVGVVFLPCGHLATCNQCAPSVANCPMCR.

It belongs to the IAP family. In terms of assembly, interacts with the caspase Strica. Interacts (via BIR2 domain) with rpr and grim. Interacts (via the BIR2 and BIR3 domains) with hid. Interacts (via BIR3 domain) with Drice. Interacts with Dredd; likely to bind Dredd simultaneously with Fadd to form a trimeric complex. In terms of processing, caspase-dependent cleavage is required for suppression of Drice-mediated cell death. Expressed in both principal and stellar cells of the Malphigian tubules.

The protein localises to the nucleus. Its subcellular location is the cytoplasm. Required for activation of NF-kappaB transcription factors in the immune deficiency (Imd) signaling cascade which is essential for innate immune responses upon infection by Gram-negative bacteria. Promotes cytoplasmic cleavage of Rel and its translocation to the nucleus where it drives expression of antimicrobial peptides. Binds, polyubiquitinates and activates Dredd which is required for Rel-mediated induction of antimicrobial peptides. Anti-apoptotic protein which binds, ubiquitinates and inactivates the effector caspase Drice. Suppresses rpr and hid-dependent cell death in the eye. However, has also been shown to have little, if any, role in the regulation of the canonical caspase-dependent apoptosis pathway. Plays a role in regulating the expression of ion channels. The chain is Death-associated inhibitor of apoptosis 2 (Diap2) from Drosophila melanogaster (Fruit fly).